A 1237-amino-acid polypeptide reads, in one-letter code: Mediator of RNA polymerase II transcription subunit 5 (1237 aa).

Disordered stretches follow at residues 1109–1131 (DDEP…TSNA) and 1202–1226 (HGAQ…ADSG). A compositionally biased stretch (low complexity) spans 1119 to 1131 (HAAANATSHTSNA).

Belongs to the Mediator complex subunit 5 family. Component of the Mediator complex.

It is found in the nucleus. Its function is as follows. Component of the Mediator complex, a coactivator involved in the regulated transcription of nearly all RNA polymerase II-dependent genes. Mediator functions as a bridge to convey information from gene-specific regulatory proteins to the basal RNA polymerase II transcription machinery. Mediator is recruited to promoters by direct interactions with regulatory proteins and serves as a scaffold for the assembly of a functional preinitiation complex with RNA polymerase II and the general transcription factors. This Mycosarcoma maydis (Corn smut fungus) protein is Mediator of RNA polymerase II transcription subunit 5 (NUT1).